Reading from the N-terminus, the 80-residue chain is Large ribosomal subunit protein bL28 (80 aa).

The segment at 1–21 is disordered; it reads MSRICQITRKKSMKGNSVAHS.

It belongs to the bacterial ribosomal protein bL28 family.

The protein is Large ribosomal subunit protein bL28 of Azobacteroides pseudotrichonymphae genomovar. CFP2.